A 398-amino-acid chain; its full sequence is MTNSPRTAAIIVAAGRGLRAGAGGPKQYRTLAGRPVIARAMEPFCTHPGVMAVQPVTNPDDTEMFNAAVAGLNFRPAVGGGATRQASVRAGLEALAELKPDIVLIHDAARCFVTPELISRAITAAGATGAALPVVAVTDTIKQVDSSGAVDATPDRASLRIAQTPQAFRFDVILDAHRRAASGGRDDFTDDAAIAEWAGLTVSTFEGDANNMKMTTPEDFAREESRLMAALGDIRTGTGYDVHAFGEGDHVWLCGLKVPHTRGFLAHSDGDVGLHALVDAILGALADGDIGSHFPPTDPQWKGAASDKFLKYAIDRVTARGGRVANLEVTMICERPKIGPLRDAMRQRIAEITGVPVSRVAVKATTSEKLGFTGREEGIAATASATIRLPWGADGLAG.

Positions 1–234 (MTNSPRTAAI…SRLMAALGDI (234 aa)) are 2-C-methyl-D-erythritol 4-phosphate cytidylyltransferase. The tract at residues 235 to 398 (RTGTGYDVHA…LPWGADGLAG (164 aa)) is 2-C-methyl-D-erythritol 2,4-cyclodiphosphate synthase. Residues Asp241 and His243 each contribute to the a divalent metal cation site. 4-CDP-2-C-methyl-D-erythritol 2-phosphate-binding positions include 241–243 (DVH) and 267–268 (HS). His275 contributes to the a divalent metal cation binding site. Residues 289-291 (DIG), 365-368 (TTSE), Phe372, and Arg375 each bind 4-CDP-2-C-methyl-D-erythritol 2-phosphate.

It in the N-terminal section; belongs to the IspD/TarI cytidylyltransferase family. IspD subfamily. The protein in the C-terminal section; belongs to the IspF family. It depends on a divalent metal cation as a cofactor.

The catalysed reaction is 2-C-methyl-D-erythritol 4-phosphate + CTP + H(+) = 4-CDP-2-C-methyl-D-erythritol + diphosphate. It carries out the reaction 4-CDP-2-C-methyl-D-erythritol 2-phosphate = 2-C-methyl-D-erythritol 2,4-cyclic diphosphate + CMP. Its pathway is isoprenoid biosynthesis; isopentenyl diphosphate biosynthesis via DXP pathway; isopentenyl diphosphate from 1-deoxy-D-xylulose 5-phosphate: step 2/6. It participates in isoprenoid biosynthesis; isopentenyl diphosphate biosynthesis via DXP pathway; isopentenyl diphosphate from 1-deoxy-D-xylulose 5-phosphate: step 4/6. Bifunctional enzyme that catalyzes the formation of 4-diphosphocytidyl-2-C-methyl-D-erythritol from CTP and 2-C-methyl-D-erythritol 4-phosphate (MEP) (IspD), and catalyzes the conversion of 4-diphosphocytidyl-2-C-methyl-D-erythritol 2-phosphate (CDP-ME2P) to 2-C-methyl-D-erythritol 2,4-cyclodiphosphate (ME-CPP) with a corresponding release of cytidine 5-monophosphate (CMP) (IspF). This is Bifunctional enzyme IspD/IspF from Rhodopseudomonas palustris (strain TIE-1).